We begin with the raw amino-acid sequence, 461 residues long: Proline--tRNA ligase (461 aa).

The protein belongs to the class-II aminoacyl-tRNA synthetase family. ProS type 3 subfamily. In terms of assembly, homodimer.

Its subcellular location is the cytoplasm. It carries out the reaction tRNA(Pro) + L-proline + ATP = L-prolyl-tRNA(Pro) + AMP + diphosphate. In terms of biological role, catalyzes the attachment of proline to tRNA(Pro) in a two-step reaction: proline is first activated by ATP to form Pro-AMP and then transferred to the acceptor end of tRNA(Pro). The chain is Proline--tRNA ligase from Methanococcus vannielii (strain ATCC 35089 / DSM 1224 / JCM 13029 / OCM 148 / SB).